A 380-amino-acid chain; its full sequence is Cytochrome b (380 aa).

The next 4 helical transmembrane spans lie at 34 to 54 (FGSL…LLAM), 78 to 99 (WLIR…YLHI), 114 to 134 (WNTG…GYVL), and 179 to 199 (FFAL…IHLT). Heme b is bound by residues His84 and His98. The heme b site is built by His183 and His197. His202 is an a ubiquinone binding site. Transmembrane regions (helical) follow at residues 227–247 (LKDF…ALFT), 289–309 (LGGV…PFLH), 321–341 (LSQT…WIGS), and 348–368 (FITI…ILFP).

The protein belongs to the cytochrome b family. In terms of assembly, the cytochrome bc1 complex contains 11 subunits: 3 respiratory subunits (MT-CYB, CYC1 and UQCRFS1), 2 core proteins (UQCRC1 and UQCRC2) and 6 low-molecular weight proteins (UQCRH/QCR6, UQCRB/QCR7, UQCRQ/QCR8, UQCR10/QCR9, UQCR11/QCR10 and a cleavage product of UQCRFS1). This cytochrome bc1 complex then forms a dimer. Heme b serves as cofactor.

Its subcellular location is the mitochondrion inner membrane. Component of the ubiquinol-cytochrome c reductase complex (complex III or cytochrome b-c1 complex) that is part of the mitochondrial respiratory chain. The b-c1 complex mediates electron transfer from ubiquinol to cytochrome c. Contributes to the generation of a proton gradient across the mitochondrial membrane that is then used for ATP synthesis. The polypeptide is Cytochrome b (MT-CYB) (Coracias caudatus (Lilac-breasted roller)).